The sequence spans 1201 residues: MKMLTKFESKSTRAKGIAFHPSRPWVLVALFSSTIQLWDYRMGTLLHRFEDHEGPVRGLDFHPTQPIFVSAGDDYTIKVWSLDTNKCLYTLTGHLDYVRTVFFHRELPWIISASDDQTIRIWNWQNRKEIACLTGHNHFVMCAQFHPTDDLIVSASLDETIRIWDISGLRKRHSAPGTSSFEEQMSAQQNLLDGSLGDCVVKFILEGHTRGVNWASFHPTLPLIVSGSDDRQVKLWRMSATKAWEVDTCRGHTNNVDSVIFHPHQNLIISVGEDKTLRVWDLDKRTPVKQFKRENDRFWLIAAHPHINLFGAAHDSGIMVFKLDRERPCSFIHQNQLFFVNAEKQIQSFNFQKRVASLPYASLKGIGQPWDAFRSISYNPSQHSVLVNEANGKFALVILPKQPVGAVEPTSVTQDTGNFATFVGRNRFVVYNKNTESVEVRSLENKVTRNIKVEETVRTIVAAGPGSVLVIHPREVILYDVQQGKKVSQLAVKNVKYVSWSLDGQYVALMSKHTITLATKKLELINSMHETIRIKSAAWDETGVLIYSTLNHIRYSLLNGDRGIIKTLEKTLYITKVQGKLVYCLNREGEIEILTIDPTEYRFKKALVNKNFPEVLRLIKDSNLVGQNIISYLQKSGYPEIALQFVQDPHIRFDLALEYGNLDVALDEAKKLNDSSTWERLIQEALAQGNASLAEMIYQTQHSFDKLSFLYLVTGDVNKLSKMQNIAQTREDFGSMLLNTFYNNSTKERSSIFAEGGSLPLAYAVAKANGDEAAASAFLEQAEVDEQDVTLPDQMDASNFVQRPVISKPLEKWPLKEAELSYFEKAVLGQIDDLTIDDETPAVNTTQEQEEPLGEENFNDEDIGEDEGAWDLGDEDLDVGEELPEEVEQGEITSPAQEVETAIWIKNSKLPAVLVAAGAFDAAVQALSKQVGVVKLEPLKKYFTNIYEGCRTYIPSTPCELPAQLGYVRAYDDTVSEDQILPYVPGLDVVNEKMNEGYKNFKLNKPDIAIECFREAIYRITLLMVDDAEDEKLAHKILETAREYILGLSIELERRSLKEGNTVRMLELAAYFTKAKLSPIHRTNALQVAMSQHFKHKNFLQASYFAGEFLKIISSGPRAEQARKIKNKADSMASDAIPIDFDPYAKFDICAATYKPIYEDTPSVSDPLTGSKYVITEKDKIDRIAMISKIGAPASGLRIRV.

6 WD repeats span residues 9–39 (SKSTRAKGIAFHPSRPWVLVALFSSTIQLWD), 51–81 (DHEGPVRGLDFHPTQPIFVSAGDDYTIKVWS), 93–123 (GHLDYVRTVFFHRELPWIISASDDQTIRIWN), 135–165 (GHNHFVMCAQFHPTDDLIVSASLDETIRIWD), 207–237 (GHTRGVNWASFHPTLPLIVSGSDDRQVKLWR), and 251–281 (GHTNNVDSVIFHPHQNLIISVGEDKTLRVWD). Residues 842-862 (AVNTTQEQEEPLGEENFNDED) are disordered. The segment covering 848–862 (EQEEPLGEENFNDED) has biased composition (acidic residues).

In terms of assembly, oligomeric complex that consists of at least the alpha, beta, beta', gamma, delta, epsilon and zeta subunits. Interacts with the ESCRT-0 subunit VPS27. Interacts with KEI1 (via C-terminal region).

The protein resides in the cytoplasm. It localises to the golgi apparatus membrane. Its subcellular location is the cytoplasmic vesicle. It is found in the COPI-coated vesicle membrane. The coatomer is a cytosolic protein complex that binds to dilysine motifs and reversibly associates with Golgi non-clathrin-coated vesicles, which further mediate biosynthetic protein transport from the ER, via the Golgi up to the trans Golgi network. Coatomer complex is required for budding from Golgi membranes, and is essential for the retrograde Golgi-to-ER transport of dilysine-tagged proteins. This Saccharomyces cerevisiae (strain ATCC 204508 / S288c) (Baker's yeast) protein is Coatomer subunit alpha (COP1).